The chain runs to 283 residues: Acetylglutamate kinase (283 aa).

Residues 64 to 65 (GG), R86, and N178 each bind substrate.

This sequence belongs to the acetylglutamate kinase family. ArgB subfamily.

It is found in the cytoplasm. It carries out the reaction N-acetyl-L-glutamate + ATP = N-acetyl-L-glutamyl 5-phosphate + ADP. It participates in amino-acid biosynthesis; L-arginine biosynthesis; N(2)-acetyl-L-ornithine from L-glutamate: step 2/4. In terms of biological role, catalyzes the ATP-dependent phosphorylation of N-acetyl-L-glutamate. The chain is Acetylglutamate kinase from Lactococcus lactis subsp. cremoris (strain MG1363).